The primary structure comprises 75 residues: Endogenous retrovirus group K member 5 Np9 protein (75 aa).

The interval 22–43 (TAPKRQRPSRTGHDDDGGFVEK) is disordered. A compositionally biased stretch (basic and acidic residues) spans 32–43 (TGHDDDGGFVEK).

The protein resides in the nucleus. May possess a function in tumorigenesis. The protein is Endogenous retrovirus group K member 5 Np9 protein (ERVK-5) of Homo sapiens (Human).